The following is a 105-amino-acid chain: Early E3A 12.1 kDa protein (105 aa).

The protein belongs to the adenoviridae E3A-2 family.

Its function is as follows. Not yet known. In Human adenovirus A serotype 12 (HAdV-12), this protein is Early E3A 12.1 kDa protein.